A 647-amino-acid chain; its full sequence is Macrolide export ATP-binding/permease protein MacB (647 aa).

Positions 7-245 constitute an ABC transporter domain; that stretch reads IRLEDICKTF…EATLQPHEEI (239 aa). ATP is bound at residue 43–50; the sequence is GASGSGKS. 4 consecutive transmembrane segments (helical) span residues 274–294, 529–549, 573–593, and 610–630; these read VLTL…LAIG, VAAI…LVSV, FIIE…ILGL, and FGPV…FGFL.

It belongs to the ABC transporter superfamily. Macrolide exporter (TC 3.A.1.122) family. In terms of assembly, homodimer.

It is found in the cell inner membrane. Non-canonical ABC transporter that contains transmembrane domains (TMD), which form a pore in the inner membrane, and an ATP-binding domain (NBD), which is responsible for energy generation. Confers resistance against macrolides. In Brucella melitensis biotype 1 (strain ATCC 23456 / CCUG 17765 / NCTC 10094 / 16M), this protein is Macrolide export ATP-binding/permease protein MacB.